The primary structure comprises 179 residues: Large ribosomal subunit protein uL5 (179 aa).

The protein belongs to the universal ribosomal protein uL5 family. In terms of assembly, part of the 50S ribosomal subunit; part of the 5S rRNA/L5/L18/L25 subcomplex. Contacts the 5S rRNA and the P site tRNA. Forms a bridge to the 30S subunit in the 70S ribosome.

This is one of the proteins that bind and probably mediate the attachment of the 5S RNA into the large ribosomal subunit, where it forms part of the central protuberance. In the 70S ribosome it contacts protein S13 of the 30S subunit (bridge B1b), connecting the 2 subunits; this bridge is implicated in subunit movement. Contacts the P site tRNA; the 5S rRNA and some of its associated proteins might help stabilize positioning of ribosome-bound tRNAs. The polypeptide is Large ribosomal subunit protein uL5 (Desulfosudis oleivorans (strain DSM 6200 / JCM 39069 / Hxd3) (Desulfococcus oleovorans)).